Reading from the N-terminus, the 217-residue chain is Probable ribonuclease P protein subunit 1 (217 aa).

This sequence belongs to the eukaryotic/archaeal RNase P protein component 1 family.

The protein resides in the nucleus. It is found in the nucleolus. The enzyme catalyses Endonucleolytic cleavage of RNA, removing 5'-extranucleotides from tRNA precursor.. Functionally, part of ribonuclease P, a protein complex that generates mature tRNA molecules by cleaving their 5'-ends. The sequence is that of Probable ribonuclease P protein subunit 1 from Schizosaccharomyces pombe (strain 972 / ATCC 24843) (Fission yeast).